Here is a 191-residue protein sequence, read N- to C-terminus: Putative NADH dehydrogenase/NAD(P)H nitroreductase (191 aa).

Position 127-132 (A127–G132) interacts with NAD(+).

This sequence belongs to the nitroreductase family. It depends on FMN as a cofactor.

The sequence is that of Putative NADH dehydrogenase/NAD(P)H nitroreductase from Methanothermobacter thermautotrophicus (strain ATCC 29096 / DSM 1053 / JCM 10044 / NBRC 100330 / Delta H) (Methanobacterium thermoautotrophicum).